Reading from the N-terminus, the 325-residue chain is Gamma-hemolysin component B (325 aa).

The N-terminal stretch at 1 to 26 (MKMNKLVKSSVATSMALLLLSGTANA) is a signal peptide.

Belongs to the aerolysin family. In terms of assembly, toxicity requires sequential binding and synergistic association of a class S and a class F component which form heterooligomeric complexes. HlgB (class F) associates with either hlgA thus forming an AB toxin or with hlgC thus forming a CB toxin. Interacts with host AMFR.

It localises to the secreted. Its function is as follows. Toxin that seems to act by forming pores in the membrane of the cell. Has a hemolytic and a leucotoxic activity. Promotes host AMFR-mediated inflammation by mediating 'Lys-27'-linked ubiquitination of TAB3, TAK1-TAB3 complex formation and phosphorylation of TAK1/MAP3K7. In turn, activates host NF-kappa-B signaling pathway. This is Gamma-hemolysin component B (hlgB) from Staphylococcus aureus (strain NCTC 8325 / PS 47).